The following is a 234-amino-acid chain: Lipoprotein-releasing system ATP-binding protein LolD (234 aa).

In terms of domain architecture, ABC transporter spans 7 to 233; sequence LQCINLCKRY…LQHHLTLVGA (227 aa). 43-50 is an ATP binding site; sequence GSSGSGKS.

It belongs to the ABC transporter superfamily. Lipoprotein translocase (TC 3.A.1.125) family. As to quaternary structure, the complex is composed of two ATP-binding proteins (LolD) and two transmembrane proteins (LolC and LolE).

The protein resides in the cell inner membrane. Functionally, part of the ABC transporter complex LolCDE involved in the translocation of mature outer membrane-directed lipoproteins, from the inner membrane to the periplasmic chaperone, LolA. Responsible for the formation of the LolA-lipoprotein complex in an ATP-dependent manner. This is Lipoprotein-releasing system ATP-binding protein LolD from Yersinia pestis bv. Antiqua (strain Antiqua).